The sequence spans 167 residues: UPF0303 protein mlr5144 (167 aa).

It belongs to the UPF0303 family.

This chain is UPF0303 protein mlr5144, found in Mesorhizobium japonicum (strain LMG 29417 / CECT 9101 / MAFF 303099) (Mesorhizobium loti (strain MAFF 303099)).